We begin with the raw amino-acid sequence, 888 residues long: Valine--tRNA ligase (888 aa).

The 'HIGH' region motif lies at 43 to 53 (PNVTGTLHLGH). A 'KMSKS' region motif is present at residues 538 to 542 (KMSKS). Residue K541 participates in ATP binding. Residues 821–888 (LIDLDAERAR…RLKAALGRLA (68 aa)) adopt a coiled-coil conformation.

Belongs to the class-I aminoacyl-tRNA synthetase family. ValS type 1 subfamily. In terms of assembly, monomer.

The protein localises to the cytoplasm. It catalyses the reaction tRNA(Val) + L-valine + ATP = L-valyl-tRNA(Val) + AMP + diphosphate. In terms of biological role, catalyzes the attachment of valine to tRNA(Val). As ValRS can inadvertently accommodate and process structurally similar amino acids such as threonine, to avoid such errors, it has a 'posttransfer' editing activity that hydrolyzes mischarged Thr-tRNA(Val) in a tRNA-dependent manner. In Gluconobacter oxydans (strain 621H) (Gluconobacter suboxydans), this protein is Valine--tRNA ligase.